Here is a 393-residue protein sequence, read N- to C-terminus: Riboflavin biosynthesis protein RibBA (393 aa).

The interval 1-200 is DHBP synthase; sequence MQFDNIDSAL…IDDLIEYRKK (200 aa). D-ribulose 5-phosphate is bound by residues 27 to 28, Asp32, 139 to 143, and Glu163; these read RE and RNGHT. Residue Glu28 coordinates Mg(2+). Residue His142 coordinates Mg(2+). Positions 201–393 are GTP cyclohydrolase II; sequence LEPEIEFKAK…TKKIKMGHLI (193 aa). 249 to 253 contacts GTP; it reads RLHSA. Residues Cys254, Cys265, and Cys267 each contribute to the Zn(2+) site. GTP-binding positions include Gln270, 291 to 293, and Thr313; that span reads EGR. Catalysis depends on Asp325, which acts as the Proton acceptor; for GTP cyclohydrolase activity. The active-site Nucleophile; for GTP cyclohydrolase activity is the Arg327. 2 residues coordinate GTP: Ser348 and Lys353.

It in the N-terminal section; belongs to the DHBP synthase family. This sequence in the C-terminal section; belongs to the GTP cyclohydrolase II family. The cofactor is Mg(2+). Mn(2+) serves as cofactor. Zn(2+) is required as a cofactor.

The enzyme catalyses D-ribulose 5-phosphate = (2S)-2-hydroxy-3-oxobutyl phosphate + formate + H(+). It carries out the reaction GTP + 4 H2O = 2,5-diamino-6-hydroxy-4-(5-phosphoribosylamino)-pyrimidine + formate + 2 phosphate + 3 H(+). Its pathway is cofactor biosynthesis; riboflavin biosynthesis; 2-hydroxy-3-oxobutyl phosphate from D-ribulose 5-phosphate: step 1/1. The protein operates within cofactor biosynthesis; riboflavin biosynthesis; 5-amino-6-(D-ribitylamino)uracil from GTP: step 1/4. Functionally, catalyzes the conversion of D-ribulose 5-phosphate to formate and 3,4-dihydroxy-2-butanone 4-phosphate. In terms of biological role, catalyzes the conversion of GTP to 2,5-diamino-6-ribosylamino-4(3H)-pyrimidinone 5'-phosphate (DARP), formate and pyrophosphate. This is Riboflavin biosynthesis protein RibBA from Staphylococcus aureus (strain Mu50 / ATCC 700699).